A 3646-amino-acid polypeptide reads, in one-letter code: Platelet adherence protein A (3646 aa).

A signal peptide spans 1–33; that stretch reads MKDFLKKVLILFTVLLMSMPSSVLNLGTSVVRA. The does not bind platelets stretch occupies residues 34-359; sequence DDPLNIETRR…KNVSFYVNEQ (326 aa). The interval 34-690 is F2, binds platelets, fibronectin, vitronectin, salivary pellicle, causes ADP secretion by dense granules; sequence DDPLNIETRR…NQDAHAKTKD (657 aa). The interval 34–1328 is binds platelets; that stretch reads DDPLNIETRR…KFVLSDTLEE (1295 aa). The 299-residue stretch at 75 to 373 folds into the VWFA domain; the sequence is DLVILQDASG…VFSQKILESV (299 aa). The short motif at 214 to 216 is the Integrin-like recognition motif NGR element; that stretch reads NGR. The short motif at 416-418 is the Integrin-like recognition motif RGT element; sequence RGT. Positions 439–466 are disordered; sequence KNSFDYDLSKEARAPETDEDSEVDPPEN. Positions 445-454 are enriched in basic and acidic residues; it reads DLSKEARAPE. The short motif at 485-487 is the Integrin-like recognition motif AGD element; the sequence is AGD. A central region with RrgB repeats region spans residues 709–3205; sequence TEVDKKVNEK…TVPNKATIAF (2497 aa). 2 stretches are compositionally biased toward basic and acidic residues: residues 1124 to 1135 and 1563 to 1573; these read KDKNDHKGEKET and DHNPKFHKDSN. Disordered regions lie at residues 1124 to 1153, 1563 to 1589, 2011 to 2036, 2170 to 2198, 2320 to 2343, 2467 to 2492, 2611 to 2644, 2767 to 2792, 2916 to 2948, 3202 to 3252, 3371 to 3412, and 3550 to 3618; these read KDKNDHKGEKETIPVTVTPPTEPNVSKKIN, DHNPKFHKDSNEVPVTPPSPEQPPIEK, FNNDPGTEQSSKPVPVIPPTPTEPEL, EKDSNIVPVTPPSPENPPVEKKVNNKPSA, KTEKSTEPVPVIPPSPEEPGIKKE, PNRPEIHKDSNRVPVTPPTPEEPEIK, ASYRVDFPNNPGVTKDSNEVPVTPPSPENPPIEK, PNKPAVTKDSNEVPVTPPSPEQPPIEKDVNSKP, TIAF…NPST, AAAK…AALE, and NDKP…PKTG. Residues 2011 to 2022 show a composition bias toward polar residues; the sequence is FNNDPGTEQSSK. The span at 2767–2778 shows a compositional bias: polar residues; the sequence is FNNDPGTEQSSK. Over residues 3210–3220 the composition is skewed to polar residues; that stretch reads GKNGTKESNPV. Residues 3223-3237 show a composition bias toward basic and acidic residues; the sequence is RPRDPEKPEEPKPNE. Coiled coils occupy residues 3326-3376 and 3408-3475; these read IAKI…AKEK and VAAL…VNDK. The segment covering 3371-3406 has biased composition (low complexity); it reads AAAKEKAAAAPATPAPASDSDAGNATATPAPADNNA. The span at 3550-3560 shows a compositional bias: polar residues; sequence NDKPKVTNTVN. A compositionally biased stretch (pro residues) spans 3563 to 3605; that stretch reads PPEPTTPPQTPPHTPPTTPGTPPPTTPDTPPAPKGDLPPAPTP. An LPXTG sorting signal motif is present at residues 3614-3618; it reads LPKTG. Pentaglycyl murein peptidoglycan amidated threonine is present on T3617. Residues 3618 to 3646 constitute a propeptide, removed by sortase; that stretch reads GTSATMVNEVIIGMILVLMGLLLRRKPKH.

Its subcellular location is the secreted. It is found in the cell wall. Its activity is regulated as follows. Whole bacterial adhesion to Chinese hamster ovary cells expressing GPIIbIIIa is abrogated by integrin inhibitor RGDS and GPIIbIIIa inhibitor Abciximab. A cell wall protein involved with Hsa in host cell interactions required for colonization and pathogenesis. Involved in recognition of platelets. Interacts with human platelet integrin receptor GPIIbIIIa (a complex of ITGA2B and ITGB3). Involved in platelet spreading, presumably by activation of outside-in signaling leading to platelet activation and then spreading. Spreading also involves GPIIbIIIa. Binding to platelets under static conditions causes platelet dense granules to secrete ADP (similar to release induced by fibrinogen binding), has no effect on platelet alpha granule release. The N-terminal 656 aa residue fragment (called F2) also binds platelets, causes dense granule secretion and allows platelet spreading. Acts in concert with Hsa to promote binding to human fibronectin (FN1) and vitronectin (VTN), and biofilm formation. F2 bind activated platelets more strongly than unactivated platelets. Binding to both FN1 and VTN is mediated at least in part by their glycosylation. This chain is Platelet adherence protein A, found in Streptococcus gordonii (strain Challis / ATCC 35105 / BCRC 15272 / CH1 / DL1 / V288).